The following is a 157-amino-acid chain: Small ribosomal subunit protein uS7c (157 aa).

This sequence belongs to the universal ribosomal protein uS7 family. In terms of assembly, part of the 30S ribosomal subunit.

It localises to the plastid. The protein resides in the organellar chromatophore. Its function is as follows. One of the primary rRNA binding proteins, it binds directly to 16S rRNA where it nucleates assembly of the head domain of the 30S subunit. This chain is Small ribosomal subunit protein uS7c (rps7), found in Paulinella chromatophora.